Here is a 148-residue protein sequence, read N- to C-terminus: MIHPLIQRLTTTLGYPLLDADGLDRQVRTQPFSVLFFAGDPQRFPEALDVAVILPELVKAFPQLAPALIAGADEARLQGRYGFSVWPSLVFLAGERYLGCLSRVLDWGEYLERIPAILAGENEDLPRIPVLSPESGTPSCSPMETSES.

The interval 128 to 148 (IPVLSPESGTPSCSPMETSES) is disordered. A compositionally biased stretch (polar residues) spans 134-148 (ESGTPSCSPMETSES).

Belongs to the HupG/HyaE family.

This Azotobacter vinelandii protein is Hydrogenase expression/formation protein HoxO (hoxO).